Reading from the N-terminus, the 116-residue chain is Hydrogenase maturation factor HypA (116 aa).

Residue His2 coordinates Ni(2+). 4 residues coordinate Zn(2+): Cys73, Cys76, Cys90, and Cys93.

Belongs to the HypA/HybF family.

In terms of biological role, involved in the maturation of [NiFe] hydrogenases. Required for nickel insertion into the metal center of the hydrogenase. This Escherichia coli O157:H7 protein is Hydrogenase maturation factor HypA.